Reading from the N-terminus, the 551-residue chain is ATP synthase subunit alpha (551 aa).

174–181 contacts ATP; the sequence is GDRQTGKT.

Belongs to the ATPase alpha/beta chains family. As to quaternary structure, F-type ATPases have 2 components, CF(1) - the catalytic core - and CF(0) - the membrane proton channel. CF(1) has five subunits: alpha(3), beta(3), gamma(1), delta(1), epsilon(1). CF(0) has three main subunits: a(1), b(2) and c(9-12). The alpha and beta chains form an alternating ring which encloses part of the gamma chain. CF(1) is attached to CF(0) by a central stalk formed by the gamma and epsilon chains, while a peripheral stalk is formed by the delta and b chains.

The protein localises to the cell inner membrane. The enzyme catalyses ATP + H2O + 4 H(+)(in) = ADP + phosphate + 5 H(+)(out). In terms of biological role, produces ATP from ADP in the presence of a proton gradient across the membrane. The alpha chain is a regulatory subunit. This Salinibacter ruber (strain DSM 13855 / M31) protein is ATP synthase subunit alpha.